Here is a 495-residue protein sequence, read N- to C-terminus: N-succinylglutamate 5-semialdehyde dehydrogenase (495 aa).

NAD(+) is bound at residue 228 to 233; that stretch reads GSYATG. Active-site residues include glutamate 251 and cysteine 285.

Belongs to the aldehyde dehydrogenase family. AstD subfamily.

It catalyses the reaction N-succinyl-L-glutamate 5-semialdehyde + NAD(+) + H2O = N-succinyl-L-glutamate + NADH + 2 H(+). It participates in amino-acid degradation; L-arginine degradation via AST pathway; L-glutamate and succinate from L-arginine: step 4/5. Catalyzes the NAD-dependent reduction of succinylglutamate semialdehyde into succinylglutamate. This is N-succinylglutamate 5-semialdehyde dehydrogenase from Legionella pneumophila (strain Corby).